The chain runs to 40 residues: Large ribosomal subunit protein bL36B (40 aa).

The protein belongs to the bacterial ribosomal protein bL36 family.

The chain is Large ribosomal subunit protein bL36B from Leifsonia xyli subsp. xyli (strain CTCB07).